The sequence spans 451 residues: Trigger factor (451 aa).

The PPIase FKBP-type domain occupies Asp165–Leu250.

This sequence belongs to the FKBP-type PPIase family. Tig subfamily.

It localises to the cytoplasm. It catalyses the reaction [protein]-peptidylproline (omega=180) = [protein]-peptidylproline (omega=0). In terms of biological role, involved in protein export. Acts as a chaperone by maintaining the newly synthesized protein in an open conformation. Functions as a peptidyl-prolyl cis-trans isomerase. This Helicobacter pylori (strain G27) protein is Trigger factor.